We begin with the raw amino-acid sequence, 127 residues long: Large ribosomal subunit protein bL17 (127 aa).

It belongs to the bacterial ribosomal protein bL17 family. Part of the 50S ribosomal subunit. Contacts protein L32.

The sequence is that of Large ribosomal subunit protein bL17 from Enterococcus faecalis (strain ATCC 700802 / V583).